Reading from the N-terminus, the 168-residue chain is MAAESLPFTLETVSSWELEAWYEDLQEVLSSDENGGPYSSSLGNEEGESKTFTTLDPASLAWLTEEPGPAEVTSSSQSPRSPDSSQSCMAQEEEEDQGRTRKRKQSGQCPARGTGKQRMKEKEQENERKVAQLAEENERLKQEIERLTREVEATRPGSDRPHVNLQQV.

Residues 10–18 (LETVSSWEL) are interaction with TRIB3. The N-terminal stretch occupies residues 10–26 (LETVSSWELEAWYEDLQ). Residues Ser-14, Ser-15, Ser-30, and Ser-31 each carry the phosphoserine; by CK2 modification. Polar residues predominate over residues 30-43 (SSDENGGPYSSSLG). Residues 30–168 (SSDENGGPYS…DRPHVNLQQV (139 aa)) form a disordered region. Positions 74 to 87 (SSSQSPRSPDSSQS) are enriched in low complexity. 2 positions are modified to phosphoserine; by MAPK14: Ser-78 and Ser-81. Residues 98 to 161 (GRTRKRKQSG…EATRPGSDRP (64 aa)) form the bZIP domain. Positions 101 to 129 (RKRKQSGQCPARGTGKQRMKEKEQENERK) are basic motif. Residues 118–162 (RMKEKEQENERKVAQLAEENERLKQEIERLTREVEATRPGSDRPH) are compositionally biased toward basic and acidic residues. The segment at 133 to 147 (LAEENERLKQEIERL) is leucine-zipper.

This sequence belongs to the bZIP family. As to quaternary structure, heterodimer. Interacts with TCF7L2/TCF4, EP300/P300, HDAC1, HDAC5 and HDAC6. Interacts with TRIB3 which blocks its association with EP300/P300. Interacts with FOXO3, CEBPB and ATF4. Post-translationally, ubiquitinated, leading to its degradation by the proteasome. Phosphorylation at serine residues by MAPK14 enhances its transcriptional activation activity while phosphorylation at serine residues by CK2 inhibits its transcriptional activation activity.

Its subcellular location is the cytoplasm. It localises to the nucleus. Multifunctional transcription factor in ER stress response. Plays an essential role in the response to a wide variety of cell stresses and induces cell cycle arrest and apoptosis in response to ER stress. Plays a dual role both as an inhibitor of CCAAT/enhancer-binding protein (C/EBP) function and as an activator of other genes. Acts as a dominant-negative regulator of C/EBP-induced transcription: dimerizes with members of the C/EBP family, impairs their association with C/EBP binding sites in the promoter regions, and inhibits the expression of C/EBP regulated genes. Positively regulates the transcription of TRIB3, IL6, IL8, IL23, TNFRSF10B/DR5, PPP1R15A/GADD34, BBC3/PUMA, BCL2L11/BIM and ERO1L. Negatively regulates; expression of BCL2 and MYOD1, ATF4-dependent transcriptional activation of asparagine synthetase (ASNS), CEBPA-dependent transcriptional activation of hepcidin (HAMP) and CEBPB-mediated expression of peroxisome proliferator-activated receptor gamma (PPARG). Inhibits the canonical Wnt signaling pathway by binding to TCF7L2/TCF4, impairing its DNA-binding properties and repressing its transcriptional activity. Plays a regulatory role in the inflammatory response through the induction of caspase-11 (CASP4/CASP11) which induces the activation of caspase-1 (CASP1) and both these caspases increase the activation of pro-IL1B to mature IL1B which is involved in the inflammatory response. This Cricetulus griseus (Chinese hamster) protein is DNA damage-inducible transcript 3 protein (DDIT3).